A 636-amino-acid polypeptide reads, in one-letter code: DNA mismatch repair protein MutL (636 aa).

The interval 341-420 (APLINKPEQQ…PGAEEYTPEA (80 aa)) is disordered. Residues 348–358 (EQQKLDFDQVR) show a composition bias toward basic and acidic residues.

This sequence belongs to the DNA mismatch repair MutL/HexB family.

Functionally, this protein is involved in the repair of mismatches in DNA. It is required for dam-dependent methyl-directed DNA mismatch repair. May act as a 'molecular matchmaker', a protein that promotes the formation of a stable complex between two or more DNA-binding proteins in an ATP-dependent manner without itself being part of a final effector complex. This is DNA mismatch repair protein MutL from Bacillus licheniformis (strain ATCC 14580 / DSM 13 / JCM 2505 / CCUG 7422 / NBRC 12200 / NCIMB 9375 / NCTC 10341 / NRRL NRS-1264 / Gibson 46).